We begin with the raw amino-acid sequence, 743 residues long: MTIPNTIPITPELIAGHGLKPDEYQRILDLIGREPTFTELGIFSAMWNEHCSYKSSKKWLRTLPTKGPRVIQGPGENAGVVDIDDGDCVVFKMESHNHPSYIEPYQGAATGVGGILRDVFTMGARPIAAMNALRFGEPDHPKTRHLVSGVVSGVGGYGNSFGVPTVGGEVEFDARYNGNILVNAFAAGIAKSNAIFLSEAKGVGLPVVYLGAKTGRDGVGGATMASAEFDESIEEKRPTVQVGDPFTEKCLLEACLELMQTGAVIAIQDMGAAGLTCSAVEMGAKGDLGILLELDKVPVREERMTAYEMMLSESQERMLMVLQPEKEQEAKAIFVKWGLDFAIVGKTTDDLRFRVMHQGEEVANLPIKDLGDQAPEYDRPWRESGKQAPLPANLVAAPKDYGQALLQLVGSANQSSRRWVYEQYDTLIQGNSLQLPGGDAGVVRVDGHPSKALAFSSDVTPRYVEADPFEGGKQAVAECWRNITATGAEPLAATDNLNFGNPEKPEIMGQFVQAVKGIGEACRALDFPIVSGNVSLYNETNGVAILPTPTIAGVGLLPDWRKMARIGSANDGDKVIMIGVDGSHLGQSVYLRDVLDSREGPAPEVDLFAERRNGDFVRSVIRNGQATACHDISSGGLAVALAEMVMASDKGLAIDLGEGKGAPHALLFGEDQARYVLTVPADVADFLCANAEGAGVPFRRLGTVGGTALTVGDLISLPIQQLRDAHESWFPDFMEGRGELAAE.

Residue His-50 is part of the active site. 2 residues coordinate ATP: Tyr-53 and Lys-92. Position 94 (Glu-94) interacts with Mg(2+). Substrate contacts are provided by residues 95–98 (SHNH) and Arg-117. His-96 serves as the catalytic Proton acceptor. Residue Asp-118 participates in Mg(2+) binding. A substrate-binding site is contributed by Gln-241. Asp-269 is a binding site for Mg(2+). Residue 313–315 (ESQ) participates in substrate binding. Positions 495 and 532 each coordinate ATP. Asn-533 is a Mg(2+) binding site. Ser-535 is a substrate binding site.

The protein belongs to the FGAMS family. As to quaternary structure, monomer. Part of the FGAM synthase complex composed of 1 PurL, 1 PurQ and 2 PurS subunits.

It is found in the cytoplasm. It carries out the reaction N(2)-formyl-N(1)-(5-phospho-beta-D-ribosyl)glycinamide + L-glutamine + ATP + H2O = 2-formamido-N(1)-(5-O-phospho-beta-D-ribosyl)acetamidine + L-glutamate + ADP + phosphate + H(+). It participates in purine metabolism; IMP biosynthesis via de novo pathway; 5-amino-1-(5-phospho-D-ribosyl)imidazole from N(2)-formyl-N(1)-(5-phospho-D-ribosyl)glycinamide: step 1/2. Its function is as follows. Part of the phosphoribosylformylglycinamidine synthase complex involved in the purines biosynthetic pathway. Catalyzes the ATP-dependent conversion of formylglycinamide ribonucleotide (FGAR) and glutamine to yield formylglycinamidine ribonucleotide (FGAM) and glutamate. The FGAM synthase complex is composed of three subunits. PurQ produces an ammonia molecule by converting glutamine to glutamate. PurL transfers the ammonia molecule to FGAR to form FGAM in an ATP-dependent manner. PurS interacts with PurQ and PurL and is thought to assist in the transfer of the ammonia molecule from PurQ to PurL. In Rhizobium leguminosarum bv. trifolii (strain WSM2304), this protein is Phosphoribosylformylglycinamidine synthase subunit PurL.